The chain runs to 132 residues: NADH-quinone oxidoreductase subunit I 1 (132 aa).

2 4Fe-4S ferredoxin-type domains span residues 42 to 71 (LKVSHDKAKCVACYLCPTVCPAKCITVEAG) and 81 to 110 (ERYEIDMLRCIFCGYCVEACPVDALKMTGQ). [4Fe-4S] cluster-binding residues include cysteine 51, cysteine 54, cysteine 57, cysteine 61, cysteine 90, cysteine 93, cysteine 96, and cysteine 100.

It belongs to the complex I 23 kDa subunit family. NDH-1 is composed of 14 different subunits. Subunits NuoA, H, J, K, L, M, N constitute the membrane sector of the complex. [4Fe-4S] cluster is required as a cofactor.

It is found in the cell inner membrane. It carries out the reaction a quinone + NADH + 5 H(+)(in) = a quinol + NAD(+) + 4 H(+)(out). Its function is as follows. NDH-1 shuttles electrons from NADH, via FMN and iron-sulfur (Fe-S) centers, to quinones in the respiratory chain. The immediate electron acceptor for the enzyme in this species is believed to be ubiquinone. Couples the redox reaction to proton translocation (for every two electrons transferred, four hydrogen ions are translocated across the cytoplasmic membrane), and thus conserves the redox energy in a proton gradient. In Geobacter sulfurreducens (strain ATCC 51573 / DSM 12127 / PCA), this protein is NADH-quinone oxidoreductase subunit I 1.